The sequence spans 241 residues: Glutathione S-transferase omega-1 (241 aa).

At Ser-2 the chain carries N-acetylserine. Residues 22–101 (GLIRVYSMRF…YLDEAYPGKK (80 aa)) enclose the GST N-terminal domain. Cys-32 serves as the catalytic Nucleophile. The residue at position 57 (Lys-57) is an N6-acetyllysine. Glutathione contacts are provided by residues Lys-59, Val-72, and 85 to 86 (ES). Residues 106–225 (DPYEKACQKM…HIEPRDLRAF (120 aa)) form the GST C-terminal domain. Lys-143, Lys-148, and Lys-152 each carry N6-acetyllysine.

As to quaternary structure, homodimer. In terms of tissue distribution, most abundant in the liver and skeletal muscle; also expressed in heart, diaphragm, colon, thymus, kidney, lung, ovaries, spleen, intestine and pancreas.

The protein resides in the cytoplasm. It is found in the cytosol. It catalyses the reaction RX + glutathione = an S-substituted glutathione + a halide anion + H(+). It carries out the reaction L-dehydroascorbate + 2 glutathione = glutathione disulfide + L-ascorbate. The enzyme catalyses methylarsonate + 2 glutathione + H(+) = methylarsonous acid + glutathione disulfide + H2O. Functionally, exhibits glutathione-dependent thiol transferase and dehydroascorbate reductase activities. Has S-(phenacyl)glutathione reductase activity. Also has glutathione S-transferase activity. Participates in the biotransformation of inorganic arsenic and reduces monomethylarsonic acid (MMA) and dimethylarsonic acid. This Sus scrofa (Pig) protein is Glutathione S-transferase omega-1 (GSTO1).